Here is a 175-residue protein sequence, read N- to C-terminus: NADH-ubiquinone oxidoreductase chain 6 (175 aa).

The next 5 helical transmembrane spans lie at 1–21, 25–45, 47–67, 88–108, and 149–169; these read MTMYIAFILSTIFVIGFVGFS, SPIYGGLGLIVSGGVGCGIVL, FGGSFLGLMVFLIYLGGMLVV, TVFGAFVSGLMMEFCMVYYAL, and YGTWLVIVTGWSLLIGVVVIM.

It belongs to the complex I subunit 6 family. As to quaternary structure, core subunit of respiratory chain NADH dehydrogenase (Complex I) which is composed of 45 different subunits.

It is found in the mitochondrion inner membrane. The enzyme catalyses a ubiquinone + NADH + 5 H(+)(in) = a ubiquinol + NAD(+) + 4 H(+)(out). Functionally, core subunit of the mitochondrial membrane respiratory chain NADH dehydrogenase (Complex I) which catalyzes electron transfer from NADH through the respiratory chain, using ubiquinone as an electron acceptor. Essential for the catalytic activity and assembly of complex I. The protein is NADH-ubiquinone oxidoreductase chain 6 (MT-ND6) of Sus scrofa (Pig).